We begin with the raw amino-acid sequence, 357 residues long: Heat-inducible transcription repressor HrcA (357 aa).

The protein belongs to the HrcA family.

Negative regulator of class I heat shock genes (grpE-dnaK-dnaJ and groELS operons). Prevents heat-shock induction of these operons. The sequence is that of Heat-inducible transcription repressor HrcA from Chlorobium phaeobacteroides (strain DSM 266 / SMG 266 / 2430).